The primary structure comprises 129 residues: Glycine cleavage system H protein (129 aa).

A Lipoyl-binding domain is found at 24-106 (TFTVGISEHA…YGDGWLFRIK (83 aa)). Lysine 65 is modified (N6-lipoyllysine).

It belongs to the GcvH family. In terms of assembly, the glycine cleavage system is composed of four proteins: P, T, L and H. (R)-lipoate is required as a cofactor.

In terms of biological role, the glycine cleavage system catalyzes the degradation of glycine. The H protein shuttles the methylamine group of glycine from the P protein to the T protein. This is Glycine cleavage system H protein from Pseudoalteromonas atlantica (strain T6c / ATCC BAA-1087).